The following is a 403-amino-acid chain: MTDLRLFTSESVTEGHPDKICDQISDSILDALLTQDPSSRAAVETLVTTGLVHVAGEVTTSGYVDIPQIVRDRIRDIGYDSSEVGFDGSNCGVTVSIGAQSPDIAQGVDRSYESRSGSASTDAHDLQGAGDQGLMFGYASRDTPVFMPLPIYLAHRLAERLAAVRHSGELSYLRPDGKTQVTIGYEGLVPRTVDTVVLSTQHGPQVSQEDLRREVEEHVIRPVLAAAAEIGIELDSRDATLLINPTGKFEIGGPKGDAGLTGRKIIVDTYGGFSRHGGGAFSGKDPSKVDRSAAYAMRWVAKNAVAAGLADRLEVQVAYAIGKAAPVGLYVEAFGTAHVPEDRIVRAIRETFDLRPAAIVERLDLLRPIYAETAAYGHFGRELPDFTWEALDRVADLQSAAGL.

Histidine 16 provides a ligand contact to ATP. Aspartate 18 serves as a coordination point for Mg(2+). Glutamate 44 is a K(+) binding site. Residues glutamate 57 and glutamine 100 each coordinate L-methionine. Positions 100 to 110 (QSPDIAQGVDR) are flexible loop. The segment at 106 to 126 (QGVDRSYESRSGSASTDAHDL) is disordered. Residues 176-178 (DGK), 248-249 (KF), aspartate 257, 263-264 (RK), alanine 280, and lysine 284 each bind ATP. Aspartate 257 contributes to the L-methionine binding site. Lysine 288 contributes to the L-methionine binding site.

Belongs to the AdoMet synthase family. As to quaternary structure, homotetramer; dimer of dimers. It depends on Mg(2+) as a cofactor. Requires K(+) as cofactor.

The protein localises to the cytoplasm. It carries out the reaction L-methionine + ATP + H2O = S-adenosyl-L-methionine + phosphate + diphosphate. The protein operates within amino-acid biosynthesis; S-adenosyl-L-methionine biosynthesis; S-adenosyl-L-methionine from L-methionine: step 1/1. Functionally, catalyzes the formation of S-adenosylmethionine (AdoMet) from methionine and ATP. The overall synthetic reaction is composed of two sequential steps, AdoMet formation and the subsequent tripolyphosphate hydrolysis which occurs prior to release of AdoMet from the enzyme. The chain is S-adenosylmethionine synthase from Clavibacter sepedonicus (Clavibacter michiganensis subsp. sepedonicus).